Reading from the N-terminus, the 449-residue chain is Ribulose bisphosphate carboxylase large chain (449 aa).

Residues 1-2 (MS) constitute a propeptide that is removed on maturation. Position 3 is an N-acetylproline (Pro-3). At Lys-14 the chain carries N6,N6,N6-trimethyllysine. Substrate is bound by residues Asn-123 and Thr-173. Lys-175 serves as the catalytic Proton acceptor. Lys-177 is a substrate binding site. The Mg(2+) site is built by Lys-201, Asp-203, and Glu-204. Lys-201 bears the N6-carboxylysine mark. The active-site Proton acceptor is the His-294. Substrate contacts are provided by Xaa-295, His-327, and Ser-379.

It belongs to the RuBisCO large chain family. Type I subfamily. Heterohexadecamer of 8 large chains and 8 small chains; disulfide-linked. The disulfide link is formed within the large subunit homodimers. Requires Mg(2+) as cofactor. Post-translationally, the disulfide bond which can form in the large chain dimeric partners within the hexadecamer appears to be associated with oxidative stress and protein turnover.

It localises to the plastid. The protein localises to the chloroplast. It carries out the reaction 2 (2R)-3-phosphoglycerate + 2 H(+) = D-ribulose 1,5-bisphosphate + CO2 + H2O. The catalysed reaction is D-ribulose 1,5-bisphosphate + O2 = 2-phosphoglycolate + (2R)-3-phosphoglycerate + 2 H(+). Its function is as follows. RuBisCO catalyzes two reactions: the carboxylation of D-ribulose 1,5-bisphosphate, the primary event in carbon dioxide fixation, as well as the oxidative fragmentation of the pentose substrate in the photorespiration process. Both reactions occur simultaneously and in competition at the same active site. In Salacia pallescens, this protein is Ribulose bisphosphate carboxylase large chain.